Reading from the N-terminus, the 436-residue chain is Adenylosuccinate synthetase (436 aa).

GTP-binding positions include 12 to 18 (GDEGKGK) and 40 to 42 (GHT). The active-site Proton acceptor is D13. Mg(2+) is bound by residues D13 and G40. Residues 13 to 16 (DEGK), 38 to 41 (NAGH), T128, R142, Q223, T238, and R302 each bind IMP. Residue H41 is the Proton donor of the active site. A substrate-binding site is contributed by 298–304 (TTTGRRR). Residues R304, 330-332 (KLD), and 412-414 (SLG) each bind GTP.

Belongs to the adenylosuccinate synthetase family. In terms of assembly, homodimer. The cofactor is Mg(2+).

It localises to the cytoplasm. The catalysed reaction is IMP + L-aspartate + GTP = N(6)-(1,2-dicarboxyethyl)-AMP + GDP + phosphate + 2 H(+). It participates in purine metabolism; AMP biosynthesis via de novo pathway; AMP from IMP: step 1/2. Functionally, plays an important role in the de novo pathway of purine nucleotide biosynthesis. Catalyzes the first committed step in the biosynthesis of AMP from IMP. This Prochlorococcus marinus (strain MIT 9515) protein is Adenylosuccinate synthetase.